Consider the following 544-residue polypeptide: Chaperonin GroEL (544 aa).

Residues 29 to 32 (TLGP), Lys-50, 86 to 90 (DGTTT), Gly-415, and Asp-495 contribute to the ATP site.

This sequence belongs to the chaperonin (HSP60) family. Forms a cylinder of 14 subunits composed of two heptameric rings stacked back-to-back. Interacts with the co-chaperonin GroES.

Its subcellular location is the cytoplasm. It catalyses the reaction ATP + H2O + a folded polypeptide = ADP + phosphate + an unfolded polypeptide.. Its function is as follows. Together with its co-chaperonin GroES, plays an essential role in assisting protein folding. The GroEL-GroES system forms a nano-cage that allows encapsulation of the non-native substrate proteins and provides a physical environment optimized to promote and accelerate protein folding. The sequence is that of Chaperonin GroEL from Tannerella forsythia (Bacteroides forsythus).